The following is a 146-amino-acid chain: Hemoglobin subunit beta-0 (146 aa).

Residues 2 to 146 (EWTDFERATI…VVSSLGRQYH (145 aa)) form the Globin domain. H63 and H92 together coordinate heme b.

It belongs to the globin family. As to quaternary structure, heterotetramer of two alpha chains and two beta chains. In terms of tissue distribution, red blood cells.

In terms of biological role, involved in oxygen transport from gills to the various peripheral tissues. The protein is Hemoglobin subunit beta-0 (hbb0) of Pagothenia borchgrevinki (Bald rockcod).